Here is a 1030-residue protein sequence, read N- to C-terminus: LPS-assembly protein LptD (1030 aa).

The signal sequence occupies residues Met-1–Ala-32. The tract at residues Val-50–Gln-213 is disordered. Residues Leu-78–Ser-91 show a composition bias toward polar residues. Positions Thr-126–Ala-137 are enriched in acidic residues. Positions Gly-161–Glu-171 are enriched in pro residues.

The protein belongs to the LptD family. Component of the lipopolysaccharide transport and assembly complex. Interacts with LptE and LptA.

It localises to the cell outer membrane. In terms of biological role, together with LptE, is involved in the assembly of lipopolysaccharide (LPS) at the surface of the outer membrane. The polypeptide is LPS-assembly protein LptD (Methylococcus capsulatus (strain ATCC 33009 / NCIMB 11132 / Bath)).